A 153-amino-acid polypeptide reads, in one-letter code: Bursicon (153 aa).

An N-terminal signal peptide occupies residues 1–22 (MLLYHIVGASVLICLLNETAKA). 5 cysteine pairs are disulfide-bonded: cysteine 29–cysteine 78, cysteine 43–cysteine 92, cysteine 53–cysteine 113, cysteine 57–cysteine 115, and cysteine 75–cysteine 118. In terms of domain architecture, CTCK spans 29 to 119 (CQATPVIHFL…PLECMCRPCT (91 aa)).

In terms of assembly, heterodimer of burs and pburs.

Its subcellular location is the secreted. Functionally, final heterodimeric neurohormone released at the end of the molting cycle, involved in the sclerotization (tanning) of the insect cuticle, melanization and wing spreading. This Apis mellifera (Honeybee) protein is Bursicon.